Reading from the N-terminus, the 684-residue chain is Actin-related protein 5 (684 aa).

The stretch at 262–469 (KEKSVIIQLP…ARQKQKQKAN (208 aa)) forms a coiled coil. Disordered stretches follow at residues 392–443 (KEKK…PEHY) and 481–500 (VNPT…EDPE). A compositionally biased stretch (basic and acidic residues) spans 402 to 443 (SMKDGRLAQKRKRDEEKEKEKEKEEERDRQEEESFLKDPEHY).

The protein belongs to the actin family. ARP5 subfamily. In terms of assembly, component of the chromatin-remodeling Ino80 complex.

The protein localises to the nucleus. Proposed core component of the chromatin remodeling Ino80 complex which is involved in transcriptional regulation, DNA replication and probably DNA repair. In Dictyostelium discoideum (Social amoeba), this protein is Actin-related protein 5 (arpE).